A 244-amino-acid polypeptide reads, in one-letter code: Derlin-2.1 (244 aa).

Residues 1-21 (MAQAVEEWYKQMPIITRSYLT) are Cytoplasmic-facing. Residues 22–42 (AAVVTTVGCSLEIISPYNLYL) traverse the membrane as a helical segment. Over 43 to 96 (NPTLVVKQYQFWRLVTNFLYFRKMDLDFLFHMFFLARYCKLLEENSFRGKTADF) the chain is Lumenal. Residues 97 to 117 (LYMLLFGATVLTGIVLIGGMI) form a helical membrane-spanning segment. The Cytoplasmic segment spans residues 118–121 (PYLS). The chain crosses the membrane as a helical span at residues 122–142 (VSFSKIIFLSNSLTFMMVYVW). Residues 143–152 (SKQNPYIHMS) lie on the Lumenal side of the membrane. A helical transmembrane segment spans residues 153–173 (FLGLFTFTAAYLPWVLLGFSI). Residues 174-244 (LVGASAWGDF…HAPFDEIHQD (71 aa)) are Cytoplasmic-facing.

It belongs to the derlin family.

The protein localises to the endoplasmic reticulum membrane. Its function is as follows. May be involved in the degradation process of specific misfolded endoplasmic reticulum (ER) luminal proteins. In Arabidopsis thaliana (Mouse-ear cress), this protein is Derlin-2.1 (DER2.1).